A 129-amino-acid polypeptide reads, in one-letter code: uncharacterized protein (129 aa).

It localises to the cytoplasm. The protein resides in the cytosol. Its subcellular location is the nucleus. This is an uncharacterized protein from Schizosaccharomyces pombe (strain 972 / ATCC 24843) (Fission yeast).